A 441-amino-acid chain; its full sequence is Transcription factor bHLH90 (441 aa).

In terms of domain architecture, bHLH spans 260 to 309; sequence NFKSKNLHSERKRRERINQAMYGLRAVVPKITKLNKIGIFSDAVDYINEL.

In terms of assembly, homodimer. In terms of tissue distribution, expressed constitutively in roots, leaves, stems, and flowers.

The protein resides in the nucleus. The polypeptide is Transcription factor bHLH90 (BHLH90) (Arabidopsis thaliana (Mouse-ear cress)).